The primary structure comprises 701 residues: 2-isopropylmalate synthase (701 aa).

Residues Met1–Ser40 are disordered. Positions Pro31–Ser40 are enriched in polar residues. The 275-residue stretch at Pro72 to Asp346 folds into the Pyruvate carboxyltransferase domain. Mg(2+) is bound by residues Asp81, His285, His287, and Asn321. The regulatory domain stretch occupies residues Pro491–Arg701. A VNTR1 repeat occupies Val575 to Pro593. The tract at residues Ala581 to Val670 is disordered. A VNTR2 repeat occupies Val594–Pro612. The stretch at Val613–Pro631 is one VNTR3 repeat. A VNTR4 repeat occupies Val632–Pro650. Residues Val651–Pro669 form a VNTR5 repeat.

The protein belongs to the alpha-IPM synthase/homocitrate synthase family. LeuA type 2 subfamily. As to quaternary structure, homodimer. Requires Mg(2+) as cofactor.

The protein localises to the cytoplasm. The catalysed reaction is 3-methyl-2-oxobutanoate + acetyl-CoA + H2O = (2S)-2-isopropylmalate + CoA + H(+). It participates in amino-acid biosynthesis; L-leucine biosynthesis; L-leucine from 3-methyl-2-oxobutanoate: step 1/4. In terms of biological role, catalyzes the condensation of the acetyl group of acetyl-CoA with 3-methyl-2-oxobutanoate (2-ketoisovalerate) to form 3-carboxy-3-hydroxy-4-methylpentanoate (2-isopropylmalate). The polypeptide is 2-isopropylmalate synthase (Mycobacterium bovis (strain ATCC BAA-935 / AF2122/97)).